Reading from the N-terminus, the 353-residue chain is Phosphate acyltransferase (353 aa).

It belongs to the PlsX family. Homodimer. Probably interacts with PlsY.

Its subcellular location is the cytoplasm. The enzyme catalyses a fatty acyl-[ACP] + phosphate = an acyl phosphate + holo-[ACP]. It functions in the pathway lipid metabolism; phospholipid metabolism. In terms of biological role, catalyzes the reversible formation of acyl-phosphate (acyl-PO(4)) from acyl-[acyl-carrier-protein] (acyl-ACP). This enzyme utilizes acyl-ACP as fatty acyl donor, but not acyl-CoA. This is Phosphate acyltransferase from Bradyrhizobium sp. (strain BTAi1 / ATCC BAA-1182).